The primary structure comprises 141 residues: Large ribosomal subunit protein uL13 (141 aa).

Belongs to the universal ribosomal protein uL13 family. In terms of assembly, part of the 50S ribosomal subunit.

This protein is one of the early assembly proteins of the 50S ribosomal subunit, although it is not seen to bind rRNA by itself. It is important during the early stages of 50S assembly. The sequence is that of Large ribosomal subunit protein uL13 from Helicobacter acinonychis (strain Sheeba).